The primary structure comprises 259 residues: Deoxyribose-phosphate aldolase (259 aa).

The active-site Proton donor/acceptor is D104. K168 acts as the Schiff-base intermediate with acetaldehyde in catalysis. The Proton donor/acceptor role is filled by K200.

This sequence belongs to the DeoC/FbaB aldolase family. DeoC type 2 subfamily.

The protein resides in the cytoplasm. It catalyses the reaction 2-deoxy-D-ribose 5-phosphate = D-glyceraldehyde 3-phosphate + acetaldehyde. It functions in the pathway carbohydrate degradation; 2-deoxy-D-ribose 1-phosphate degradation; D-glyceraldehyde 3-phosphate and acetaldehyde from 2-deoxy-alpha-D-ribose 1-phosphate: step 2/2. Functionally, catalyzes a reversible aldol reaction between acetaldehyde and D-glyceraldehyde 3-phosphate to generate 2-deoxy-D-ribose 5-phosphate. This chain is Deoxyribose-phosphate aldolase, found in Agrobacterium fabrum (strain C58 / ATCC 33970) (Agrobacterium tumefaciens (strain C58)).